An 880-amino-acid chain; its full sequence is MITANEIRHRFLEFFRKNGHEVVDSSSLVPNDDPTLLFTNAGMVQFKKIFLGQEKRAYSRATTSQKCLRVGGKHNDLENVGRTARHHTFFEMLGNFSFGDYFKEDAIRFAWSFITEELKLPKEKLYITIYRDDDEAEKLWQSVAGVPSERIYRLGEKDNFWSMGDTGPCGPCSEIHIDQGADMACGPDCGIGKCDCDRFLEIWNLVFMQYDQAPDGTRTPLPNPCIDTGMGLERIAAVCQNVRSNFDCDLFQAFINYTAELAGVSYRKDSEDTDTALRVIADHSRAIAFMIADGILPSNEGRGYVLRRLIRRAYRFGRLIGLEGSYLYKTALKVVEEMGGAFPELLENKDFMARVVREEEERFNKTLDKGLLLLEDELSALTARNSTCVAGDVAFKLYDTFGFPLDIVNDIAEKRGFSVDEDGFKKLMQEQKSRAKAAWKGGGEQTLAARFQALLEEGIASEFVGYDHLSAESRIIALLGEDMESVEALPAGAAGYLVSTRTPFYGESGGQLGDTGDAVSETGSAEVTDTLKPSAKLLVHVVKVSQGELLRDQAVTLTVREGQRFASARNHTCTHILHAALRKVLGDHVKQAGSLVGPERLRFDFTHISAMTPEEILAVENEVNRVILSDIALNSEHMAYDDAVQKGAMALFGEKYESEVRVVSIPGESVELCGGTHLRATGQAGSFYITSESGVAAGVRRIEAVTGWDAVRLFMQQRAELHEVAGLVKGKPGDIAGRVKTLQKEVRTLKKDMEKLAAQAASGKGRNLMDSVEEVNGVKLLAASLPGANVKALREVMDDVRSKLTSGVACLVAVDGDKVHMLIAVSKDLHDRFTAPALIKDVAARIGGSGGGRPDMAQAGGTDPQGVEDAFACLRQIMGA.

H571, H575, C673, and H677 together coordinate Zn(2+).

This sequence belongs to the class-II aminoacyl-tRNA synthetase family. The cofactor is Zn(2+).

The protein resides in the cytoplasm. It carries out the reaction tRNA(Ala) + L-alanine + ATP = L-alanyl-tRNA(Ala) + AMP + diphosphate. In terms of biological role, catalyzes the attachment of alanine to tRNA(Ala) in a two-step reaction: alanine is first activated by ATP to form Ala-AMP and then transferred to the acceptor end of tRNA(Ala). Also edits incorrectly charged Ser-tRNA(Ala) and Gly-tRNA(Ala) via its editing domain. In Oleidesulfovibrio alaskensis (strain ATCC BAA-1058 / DSM 17464 / G20) (Desulfovibrio alaskensis), this protein is Alanine--tRNA ligase.